A 259-amino-acid polypeptide reads, in one-letter code: tRNA (guanine-N(7)-)-methyltransferase (259 aa).

The tract at residues 1–73 (MGHHGQMHAQ…GPAEDPDRPG (73 aa)) is disordered. S-adenosyl-L-methionine contacts are provided by Glu-91, Glu-116, Asn-143, and Asp-166. The active site involves Asp-166. Substrate-binding positions include Lys-170, Asp-202, and 238-241 (TKYE).

This sequence belongs to the class I-like SAM-binding methyltransferase superfamily. TrmB family.

It carries out the reaction guanosine(46) in tRNA + S-adenosyl-L-methionine = N(7)-methylguanosine(46) in tRNA + S-adenosyl-L-homocysteine. It participates in tRNA modification; N(7)-methylguanine-tRNA biosynthesis. Functionally, catalyzes the formation of N(7)-methylguanine at position 46 (m7G46) in tRNA. This Mycolicibacterium paratuberculosis (strain ATCC BAA-968 / K-10) (Mycobacterium paratuberculosis) protein is tRNA (guanine-N(7)-)-methyltransferase.